A 197-amino-acid chain; its full sequence is Adenylate kinase 1 (197 aa).

19 to 24 (GSGKGT) lines the ATP pocket. Residues 39–68 (SSGDLLRAEVQSGSPKGKELKAMMERGELV) are NMP. Residues S40, R45, 95-98 (GYPR), and Q102 contribute to the AMP site. The interval 132–142 (KRAETSNRVDD) is LID. Position 133 (R133) interacts with ATP. AMP is bound by residues R139 and R150. G178 is an ATP binding site.

The protein belongs to the adenylate kinase family. AK1 subfamily. Monomer. The cofactor is Mg(2+).

The protein resides in the cytoplasm. The catalysed reaction is AMP + ATP = 2 ADP. The protein operates within purine metabolism; purine nucleotide biosynthesis. Catalyzes the reversible transfer of the terminal phosphate group between ATP and AMP. Plays an important role in cellular energy homeostasis and in adenine nucleotide metabolism. The polypeptide is Adenylate kinase 1 (Schistosoma mansoni (Blood fluke)).